A 430-amino-acid chain; its full sequence is Enolase (430 aa).

Gln167 serves as a coordination point for (2R)-2-phosphoglycerate. Glu209 functions as the Proton donor in the catalytic mechanism. Positions 245, 286, and 313 each coordinate Mg(2+). (2R)-2-phosphoglycerate-binding residues include Lys338, Arg367, Ser368, and Lys389. The active-site Proton acceptor is the Lys338.

This sequence belongs to the enolase family. The cofactor is Mg(2+).

The protein localises to the cytoplasm. It localises to the secreted. Its subcellular location is the cell surface. The enzyme catalyses (2R)-2-phosphoglycerate = phosphoenolpyruvate + H2O. It functions in the pathway carbohydrate degradation; glycolysis; pyruvate from D-glyceraldehyde 3-phosphate: step 4/5. Its function is as follows. Catalyzes the reversible conversion of 2-phosphoglycerate (2-PG) into phosphoenolpyruvate (PEP). It is essential for the degradation of carbohydrates via glycolysis. This Parasynechococcus marenigrum (strain WH8102) protein is Enolase.